The following is a 497-amino-acid chain: Serine carboxypeptidase-like 20 (497 aa).

Residues methionine 1–alanine 29 form the signal peptide. 3 cysteine pairs are disulfide-bonded: cysteine 90–cysteine 386, cysteine 254–cysteine 266, and cysteine 289–cysteine 353. N-linked (GlcNAc...) asparagine glycosylation is found at asparagine 111 and asparagine 146. Serine 186 is an active-site residue. N-linked (GlcNAc...) asparagine glycosylation is present at asparagine 249. N-linked (GlcNAc...) asparagine glycosylation is present at asparagine 405. The active site involves aspartate 421. A glycan (N-linked (GlcNAc...) asparagine) is linked at asparagine 463. Residue histidine 474 is part of the active site. The Microbody targeting signal motif lies at serine 495–isoleucine 497.

It belongs to the peptidase S10 family. In terms of tissue distribution, ubiquitous.

It is found in the secreted. Its function is as follows. Probable carboxypeptidase. This chain is Serine carboxypeptidase-like 20 (SCPL20), found in Arabidopsis thaliana (Mouse-ear cress).